The following is a 158-amino-acid chain: Probable flavodoxin 1 (158 aa).

The Flavodoxin-like domain maps to 4-144; sequence ALITYASMSG…SCRAFARGFL (141 aa).

The protein belongs to the flavodoxin family. FMN is required as a cofactor.

Functionally, low-potential electron donor to a number of redox enzymes. This Bacillus subtilis (strain 168) protein is Probable flavodoxin 1 (ykuN).